Here is a 185-residue protein sequence, read N- to C-terminus: Testis development-related protein (185 aa).

Disordered regions lie at residues 1-29 and 121-156; these read MWKL…PPAA and ADPE…ANSS.

The protein belongs to the TDRP family. As to quaternary structure, interacts with PRM2. In terms of tissue distribution, expressed in spermatogenic cells, especially in spermatocytes (at protein level).

The protein localises to the nucleus. The protein resides in the cytoplasm. Contributes to normal sperm motility, but not essential for male fertility. In Homo sapiens (Human), this protein is Testis development-related protein (TDRP).